A 915-amino-acid polypeptide reads, in one-letter code: Protein SLFN14 (915 aa).

Residues 157 to 167 show a composition bias toward basic residues; sequence AAQRGRRRLHP. Residues 157–176 form a disordered region; the sequence is AAQRGRRRLHPPRASNSNLQ. Positions 204–389 are required for endoribonuclease activity; that stretch reads ESTHVEFKRF…KVLEFKGALQ (186 aa). The segment at 390–569 is required for ribosome binding; sequence RHLFPVTQKT…QLGCEFFNLL (180 aa).

As to quaternary structure, associates with ribosomes in an ATP-independent manner. The cofactor is Mg(2+). Requires Mn(2+) as cofactor. Detected in reticulocytes (at protein level).

It is found in the nucleus. Shows no ribosome-associated and endoribonuclease activities. In terms of biological role, displays polysome-associated endoribonuclease activity towards mRNAs and rRNAs. May play a role in RNA surveillance pathways by recognizing stalled ribosomes and triggering endonucleolytic cleavage of aberrant mRNAs. Cleaves RNAs in a magnesium-, manganese-dependent and ATP-independent manner. Involved in correct maturation of megakaryocytes and especially important for proplatelet extension. This Oryctolagus cuniculus (Rabbit) protein is Protein SLFN14.